A 317-amino-acid chain; its full sequence is Acetyl-coenzyme A carboxylase carboxyl transferase subunit alpha (317 aa).

The 255-residue stretch at 39–293 folds into the CoA carboxyltransferase C-terminal domain; it reads RLESRVNDAM…GDVIAKALAD (255 aa).

The protein belongs to the AccA family. Acetyl-CoA carboxylase is a heterohexamer composed of biotin carboxyl carrier protein (AccB), biotin carboxylase (AccC) and two subunits each of ACCase subunit alpha (AccA) and ACCase subunit beta (AccD).

Its subcellular location is the cytoplasm. The enzyme catalyses N(6)-carboxybiotinyl-L-lysyl-[protein] + acetyl-CoA = N(6)-biotinyl-L-lysyl-[protein] + malonyl-CoA. Its pathway is lipid metabolism; malonyl-CoA biosynthesis; malonyl-CoA from acetyl-CoA: step 1/1. Its function is as follows. Component of the acetyl coenzyme A carboxylase (ACC) complex. First, biotin carboxylase catalyzes the carboxylation of biotin on its carrier protein (BCCP) and then the CO(2) group is transferred by the carboxyltransferase to acetyl-CoA to form malonyl-CoA. The sequence is that of Acetyl-coenzyme A carboxylase carboxyl transferase subunit alpha from Agrobacterium fabrum (strain C58 / ATCC 33970) (Agrobacterium tumefaciens (strain C58)).